The sequence spans 188 residues: Trafficking protein particle complex subunit 5 (188 aa).

Serine 10 carries the phosphoserine modification.

This sequence belongs to the TRAPP small subunits family. BET3 subfamily. In terms of assembly, component of the multisubunit TRAPP (transport protein particle) complex, which includes at least TRAPPC2, TRAPPC2L, TRAPPC3, TRAPPC3L, TRAPPC4, TRAPPC5, TRAPPC8, TRAPPC9, TRAPPC10, TRAPPC11 and TRAPPC12.

It is found in the golgi apparatus. It localises to the cis-Golgi network. The protein localises to the endoplasmic reticulum. Its function is as follows. May play a role in vesicular transport from endoplasmic reticulum to Golgi. The chain is Trafficking protein particle complex subunit 5 (TRAPPC5) from Bos taurus (Bovine).